We begin with the raw amino-acid sequence, 148 residues long: U2 snRNP component IST3 (148 aa).

The RRM domain maps to 31–109 (AYIYIGNLNR…RALKIDHTFY (79 aa)).

This sequence belongs to the IST3 family. As to quaternary structure, component of the 45S U1.U2.U4/U6.U5 penta-snRNP particle, a subcomplex of the spliceosome. Belongs to the CWC complex (or CEF1-associated complex), a spliceosome sub-complex reminiscent of a late-stage spliceosome composed of the U2, U5 and U6 snRNAs and at least BUD13, BUD31, BRR2, CDC40, CEF1, CLF1, CUS1, CWC2, CWC15, CWC21, CWC22, CWC23, CWC24, CWC25, CWC27, ECM2, HSH155, IST3, ISY1, LEA1, MSL1, NTC20, PRP8, PRP9, PRP11, PRP19, PRP21, PRP22, PRP45, PRP46, SLU7, SMB1, SMD1, SMD2, SMD3, SMX2, SMX3, SNT309, SNU114, SPP2, SYF1, SYF2, RSE1 and YJU2. Belongs to the pre-mRNA retention and splicing (RES) complex composed of at least BUD13, IST3 and PML1. Subunit of the U2 snRNP. Interacts with RDS3.

The protein resides in the cytoplasm. The protein localises to the nucleus. Required for pre-mRNA splicing and spliceosome assembly. As part of the pre-mRNA retention and splicing (RES) complex, required for nuclear pre-mRNA retention and efficient splicing. Required for MER1-activated splicing. The protein is U2 snRNP component IST3 (IST3) of Saccharomyces cerevisiae (strain ATCC 204508 / S288c) (Baker's yeast).